The following is an 840-amino-acid chain: Translation initiation factor IF-2 (840 aa).

The disordered stretch occupies residues 1–251; sequence MTEEKKFSSS…GPAVPATERK (251 aa). Composition is skewed to polar residues over residues 38 to 50 and 65 to 83; these read DGTN…TPRS and NRHT…ASRP. Residues 84 to 102 show a composition bias toward low complexity; the sequence is NQSKSQGQGGRNNQRPGSR. Composition is skewed to basic and acidic residues over residues 110-135 and 158-168; these read PMIR…KTDN and KPAEQSKKAAE. The segment covering 169 to 207 has biased composition (low complexity); it reads KPAQTKPKTAETKTTATTTQSGTGKFGGALASGNNSARN. Basic residues predominate over residues 230-239; the sequence is GSKKSRRIAA. In terms of domain architecture, tr-type G spans 341 to 510; the sequence is ARPPVVTIMG…LLQAEVLELK (170 aa). The G1 stretch occupies residues 350–357; sequence GHVDHGKT. 350-357 is a binding site for GTP; sequence GHVDHGKT. Residues 375–379 form a G2 region; that stretch reads GITQH. A G3 region spans residues 396 to 399; that stretch reads DTPG. Residues 396–400 and 450–453 each bind GTP; these read DTPGH and NKID. Residues 450–453 form a G4 region; that stretch reads NKID. Residues 486-488 form a G5 region; it reads SAK.

This sequence belongs to the TRAFAC class translation factor GTPase superfamily. Classic translation factor GTPase family. IF-2 subfamily.

The protein resides in the cytoplasm. In terms of biological role, one of the essential components for the initiation of protein synthesis. Protects formylmethionyl-tRNA from spontaneous hydrolysis and promotes its binding to the 30S ribosomal subunits. Also involved in the hydrolysis of GTP during the formation of the 70S ribosomal complex. This Leuconostoc citreum (strain KM20) protein is Translation initiation factor IF-2.